We begin with the raw amino-acid sequence, 209 residues long: Small ribosomal subunit protein uS4 (209 aa).

Residues Thr-98–Leu-161 form the S4 RNA-binding domain.

This sequence belongs to the universal ribosomal protein uS4 family. As to quaternary structure, part of the 30S ribosomal subunit. Contacts protein S5. The interaction surface between S4 and S5 is involved in control of translational fidelity.

One of the primary rRNA binding proteins, it binds directly to 16S rRNA where it nucleates assembly of the body of the 30S subunit. Functionally, with S5 and S12 plays an important role in translational accuracy. In Stenotrophomonas maltophilia (strain R551-3), this protein is Small ribosomal subunit protein uS4.